Reading from the N-terminus, the 254-residue chain is Allene oxide cyclase 1, chloroplastic (254 aa).

A chloroplast-targeting transit peptide spans 1–78; that stretch reads MASSTISLQS…QNLGNTENPR (78 aa). Low complexity predominate over residues 44–56; sequence SNGPGSSSPTSFT. Positions 44–79 are disordered; the sequence is SNGPGSSSPTSFTPKKKLTPTRALSQNLGNTENPRP. Polar residues predominate over residues 65 to 77; the sequence is RALSQNLGNTENP.

The protein belongs to the allene oxide cyclase family. As to expression, highly expressed in fully developed leaves.

The protein localises to the plastid. It localises to the chloroplast. It catalyses the reaction (9Z,13S,15Z)-12,13-epoxyoctadeca-9,11,15-trienoate = (9S,13S,15Z)-12-oxophyto-10,15-dienoate. Its function is as follows. Involved in the production of 12-oxo-phytodienoic acid (OPDA), a precursor of jasmonic acid. The polypeptide is Allene oxide cyclase 1, chloroplastic (AOC1) (Arabidopsis thaliana (Mouse-ear cress)).